The sequence spans 182 residues: MNSHENRVAAPLLSFRLSLVLFAVLSVLPLGGCARWDNPVLSVKETSAAQLLGANQINAATRQRILRAVGEDAQERALRDDLKQHPGNVDAAIRLTKALVAQKRPHEALQVLDNVLVVTPDNLRALNAKAVILDIEGRHDAAQELYRQALETNPENQMLHHNLHLSLAFEGKSEQRTLPQSR.

A helical transmembrane segment spans residues 17–34; sequence LSLVLFAVLSVLPLGGCA. TPR repeat units follow at residues 89–122 and 123–156; these read VDAA…TPDN and LRAL…NPEN.

It localises to the membrane. This is an uncharacterized protein from Sinorhizobium fredii (strain NBRC 101917 / NGR234).